We begin with the raw amino-acid sequence, 494 residues long: Probable malate:quinone oxidoreductase 3 (494 aa).

This sequence belongs to the MQO family. FAD is required as a cofactor.

It catalyses the reaction (S)-malate + a quinone = a quinol + oxaloacetate. It participates in carbohydrate metabolism; tricarboxylic acid cycle; oxaloacetate from (S)-malate (quinone route): step 1/1. The chain is Probable malate:quinone oxidoreductase 3 from Staphylococcus epidermidis (strain ATCC 35984 / DSM 28319 / BCRC 17069 / CCUG 31568 / BM 3577 / RP62A).